Here is a 683-residue protein sequence, read N- to C-terminus: Boron transporter 4 (683 aa).

At 1-38 (MEEERVDSSKRLFRGIVADLRGRALCYKEDWVAGLRSG) the chain is on the cytoplasmic side. Residues 39–59 (FGILAPTTYIFFASALPVIAF) traverse the membrane as a helical segment. At 60–80 (GEQLSRDTEGALSTVETLAST) the chain is on the extracellular side. The chain crosses the membrane as a helical span at residues 81 to 101 (ALCGVIHSILGGQPLLILGVA). The Cytoplasmic segment spans residues 102-126 (EPTVLMYVYLYNFAIGRPELGKQLY). The helical transmembrane segment at 127–147 (LAWAAWVCVWTALLLFVMAIL) threads the bilayer. Residues 148-160 (NTADIINRFTRVA) are Extracellular-facing. The helical transmembrane segment at 161 to 181 (GELFGMLISVLFIQQAIKGMV) threads the bilayer. Residues 182 to 200 (SEFGMPKDEDSKLEKYKFE) are Cytoplasmic-facing. The helical transmembrane segment at 201-221 (WLYTNGLLGLIFTFGLLYTAL) threads the bilayer. Over 222–238 (KSRKARSWRYGTGWYRS) the chain is Extracellular. A helical transmembrane segment spans residues 239–259 (FIADYGVPLMVVVWTALSFST). At 260–294 (PSKLPSGVPRRLFSPLPWDSPSLSHWTVIKDMGKV) the chain is on the cytoplasmic side. Residues 295 to 315 (SPGYIFAAFIPALMIAGLYFF) form a helical membrane-spanning segment. Residues 316-335 (DHSVASQLAQQKEFNLKKPS) lie on the Extracellular side of the membrane. The helical transmembrane segment at 336-356 (AYHYDILLLGFMTLICGLLGL) threads the bilayer. The Cytoplasmic portion of the chain corresponds to 357–477 (PPSNGVLPQS…EQRVSNLLQS (121 aa)). A helical membrane pass occupies residues 478–498 (LLVAGAVLAMPAIKLIPTSIL). At 499–565 (WGYFAYMAID…QIFYFGLCYG (67 aa)) the chain is on the extracellular side. A helical membrane pass occupies residues 566–586 (VTWIPVAGIMFPVPFFLLIAI). Over 587–683 (RQYILPKLFN…GDGDMSTTRE (97 aa)) the chain is Cytoplasmic. Disordered stretches follow at residues 617-638 (NPLE…GDAE) and 661-683 (KGNQ…TTRE).

Belongs to the anion exchanger (TC 2.A.31.3) family. Expressed in the distal sides of epidermal cells in the elongation zone of roots.

The protein localises to the membrane. Efflux-type boron transporter polarly localized in roots. Boron is essential for maintaining the integrity of plants cell walls. The protein is Boron transporter 4 (BOR4) of Arabidopsis thaliana (Mouse-ear cress).